The primary structure comprises 375 residues: Solute carrier family 35 member F2 (375 aa).

M1 is subject to N-acetylmethionine. A phosphoserine mark is found at S5, S22, S25, and S28. 10 helical membrane passes run 39-59 (ILKTIALGQMLSLCICGTAIT), 73-93 (MLQSFINYCLLFLVYTLMLAF), 108-126 (WWKYTLLGLADVEANYLIV), 136-156 (SVQLLDCFGIPVLMALSWFIL), 165-185 (FIAVFVCLLGVGTMVGADILA), 195-215 (VLIGDILVLLGASLYAVSNVC), 227-247 (EFLGMVGLFGTIISGIQLLIV), 263-283 (LLFVAFALCMFCLYSFMPLVI), 290-310 (SVNLGILTADLYSLFFGLFLF), and 314-334 (FSGLYILSFTVIMVGFILYCS). Residue S372 is modified to Phosphoserine.

It belongs to the SLC35F solute transporter family.

It localises to the membrane. Its function is as follows. Putative solute transporter. The protein is Solute carrier family 35 member F2 (Slc35f2) of Mus musculus (Mouse).